A 614-amino-acid chain; its full sequence is Methionine--tRNA ligase (614 aa).

The 'HIGH' region signature appears at 11-21 (PYTNGPRHIGH). 4 residues coordinate Zn(2+): cysteine 143, cysteine 146, cysteine 156, and cysteine 159. Positions 359–363 (QFSTS) match the 'KMSKS' region motif. Threonine 362 is an ATP binding site.

The protein belongs to the class-I aminoacyl-tRNA synthetase family. MetG type 1 subfamily. Monomer. Zn(2+) is required as a cofactor.

Its subcellular location is the cytoplasm. The catalysed reaction is tRNA(Met) + L-methionine + ATP = L-methionyl-tRNA(Met) + AMP + diphosphate. Functionally, is required not only for elongation of protein synthesis but also for the initiation of all mRNA translation through initiator tRNA(fMet) aminoacylation. In Beutenbergia cavernae (strain ATCC BAA-8 / DSM 12333 / CCUG 43141 / JCM 11478 / NBRC 16432 / NCIMB 13614 / HKI 0122), this protein is Methionine--tRNA ligase.